Reading from the N-terminus, the 679-residue chain is HEAT repeat-containing protein 3 (679 aa).

Over residues 1–11 the composition is skewed to basic residues; the sequence is MGKSRTKRFKR. The disordered stretch occupies residues 1–40; that stretch reads MGKSRTKRFKRPQFSPIESCQAEAAAASNGTGDEEDDGPA. Ser15 bears the Phosphoserine mark. HEAT repeat units follow at residues 38-69 and 74-110; these read GPAA…VQQR and DLAR…SACG. A Phosphoserine modification is found at Ser144. A Phosphothreonine modification is found at Thr339.

Belongs to the nuclear import and ribosome assembly adapter family. As to quaternary structure, component of a hexameric 5S RNP precursor complex, composed of 5S RNA, RRS1, RPF2/BXDC1, RPL5, RPL11 and HEATR3; this complex acts as a precursor for ribosome assembly.

Its function is as follows. Plays a role in ribosome biogenesis and in nuclear import of the 60S ribosomal protein L5/large ribosomal subunit protein uL18 (RPL5). Required for proper erythrocyte maturation. The chain is HEAT repeat-containing protein 3 (Heatr3) from Mus musculus (Mouse).